Here is a 291-residue protein sequence, read N- to C-terminus: Bifunctional protein FolD 1 (291 aa).

Residues 167 to 169 (GAS), isoleucine 192, and isoleucine 233 contribute to the NADP(+) site.

Belongs to the tetrahydrofolate dehydrogenase/cyclohydrolase family. In terms of assembly, homodimer.

The catalysed reaction is (6R)-5,10-methylene-5,6,7,8-tetrahydrofolate + NADP(+) = (6R)-5,10-methenyltetrahydrofolate + NADPH. The enzyme catalyses (6R)-5,10-methenyltetrahydrofolate + H2O = (6R)-10-formyltetrahydrofolate + H(+). The protein operates within one-carbon metabolism; tetrahydrofolate interconversion. Its function is as follows. Catalyzes the oxidation of 5,10-methylenetetrahydrofolate to 5,10-methenyltetrahydrofolate and then the hydrolysis of 5,10-methenyltetrahydrofolate to 10-formyltetrahydrofolate. The polypeptide is Bifunctional protein FolD 1 (Pseudomonas putida (strain ATCC 47054 / DSM 6125 / CFBP 8728 / NCIMB 11950 / KT2440)).